The primary structure comprises 287 residues: ATP synthase gamma chain (287 aa).

The protein belongs to the ATPase gamma chain family. In terms of assembly, F-type ATPases have 2 components, CF(1) - the catalytic core - and CF(0) - the membrane proton channel. CF(1) has five subunits: alpha(3), beta(3), gamma(1), delta(1), epsilon(1). CF(0) has three main subunits: a, b and c.

The protein localises to the cell inner membrane. In terms of biological role, produces ATP from ADP in the presence of a proton gradient across the membrane. The gamma chain is believed to be important in regulating ATPase activity and the flow of protons through the CF(0) complex. This Hahella chejuensis (strain KCTC 2396) protein is ATP synthase gamma chain.